Consider the following 61-residue polypeptide: Large ribosomal subunit protein bL32 (61 aa).

Over residues 1–16 (MAVPKRKTSPSKRGMR) the composition is skewed to basic residues. Residues 1–33 (MAVPKRKTSPSKRGMRRSADGLKAPTYVEDKNS) are disordered.

Belongs to the bacterial ribosomal protein bL32 family.

The sequence is that of Large ribosomal subunit protein bL32 from Allorhizobium ampelinum (strain ATCC BAA-846 / DSM 112012 / S4) (Agrobacterium vitis (strain S4)).